The sequence spans 479 residues: Neuronal acetylcholine receptor subunit alpha-9 (479 aa).

An N-terminal signal peptide occupies residues 1 to 25 (MNRPHSCLSFCWMYFAASGIRAVET). Over 26 to 237 (ANGKYAQKLF…TFTLLLKRRS (212 aa)) the chain is Extracellular. N-linked (GlcNAc...) asparagine glycosylation occurs at N57. The cysteines at positions 155 and 169 are disulfide-linked. N-linked (GlcNAc...) asparagine glycosylation is present at N170. Residues S191 and D193 each contribute to the Na(+) site. Cysteines 219 and 220 form a disulfide. A run of 3 helical transmembrane segments spans residues 238–262 (SFYI…FYLP), 269–287 (VSLG…LMVA), and 302–323 (YYIA…VMNI). Topologically, residues 324–457 (HFCGAEARPV…WKKVAKVIDR (134 aa)) are cytoplasmic. A helical membrane pass occupies residues 458-476 (FFMWIFFAMVFVMTVLIIA).

Belongs to the ligand-gated ion channel (TC 1.A.9) family. Acetylcholine receptor (TC 1.A.9.1) subfamily. Alpha-9/CHRNA9 sub-subfamily. In terms of assembly, forms homo- or heterooligomeric channels in conjunction with CHRNA10. The native outer hair cell receptor may be composed of CHRNA9:CHRNA10 heterooligomers. Found in the stoichiometric form (CHRNA9)2:(CHRNA10)3. In terms of tissue distribution, detected in the nasal epithelium, in the outer hair cells of the cochlea, in the pars tuberalis of the hypophysis, and in the developing muscle of the tongue. Also expressed in the neurons of dorsal root ganglia.

The protein localises to the synaptic cell membrane. It localises to the cell membrane. It carries out the reaction Ca(2+)(in) = Ca(2+)(out). It catalyses the reaction Mg(2+)(in) = Mg(2+)(out). The catalysed reaction is K(+)(in) = K(+)(out). The enzyme catalyses Na(+)(in) = Na(+)(out). Activated by a myriad of ligands such as acetylcholine. AChR activity is inhibited by the antagonist alpha-conotoxins RgIA and GeXXA, small disulfide-constrained peptides from cone snails. Its function is as follows. Component of neuronal acetylcholine receptors (nAChRs) that function as pentameric, ligand-gated cation channels with high calcium permeability among other activities. nAChRs are excitatory neurotrasnmitter receptors formed by a collection of nAChR subunits known to mediate synaptic transmission in the nervous system and the neuromuscular junction. Each nAchR subunit confers differential attributes to channel properties, including activation, deactivation and desensitization kinetics, pH sensitivity, cation permeability, and binding to allosteric modulators. Forms either homopentamers or heteropentamers with CHRNA10. Expressed in the inner ear, in sympathetic neurons and in other non-neuronal cells, such as skin keratinocytes and lymphocytes. nAChR formed by CHRNA9:CHRNA10 mediate central nervous system control of auditory and vestibular sensory processing. The channel is permeable to a range of divalent cations including calcium, the influx of which may activate a potassium current which hyperpolarizes the cell membrane. In the ear, mediates synaptic transmission between efferent olivocochlear fibers and hair cells of the cochlea, this may lead to a reduction in basilar membrane motion, altering the activity of auditory nerve fibers and reducing the range of dynamic hearing. This may protect against acoustic trauma. May also regulate keratinocyte adhesion. This chain is Neuronal acetylcholine receptor subunit alpha-9 (Chrna9), found in Rattus norvegicus (Rat).